A 207-amino-acid chain; its full sequence is Superoxide dismutase [Mn] (207 aa).

The Mn(2+) site is built by histidine 28, histidine 76, aspartate 160, and histidine 164.

This sequence belongs to the iron/manganese superoxide dismutase family. Mn(2+) is required as a cofactor.

It catalyses the reaction 2 superoxide + 2 H(+) = H2O2 + O2. In terms of biological role, destroys superoxide anion radicals which are normally produced within the cells and which are toxic to biological systems. The protein is Superoxide dismutase [Mn] (sodA) of Mycolicibacterium fortuitum (Mycobacterium fortuitum).